The chain runs to 325 residues: Transaldolase (325 aa).

Lysine 125 serves as the catalytic Schiff-base intermediate with substrate.

The protein belongs to the transaldolase family. Type 2 subfamily.

It localises to the cytoplasm. It catalyses the reaction D-sedoheptulose 7-phosphate + D-glyceraldehyde 3-phosphate = D-erythrose 4-phosphate + beta-D-fructose 6-phosphate. It participates in carbohydrate degradation; pentose phosphate pathway; D-glyceraldehyde 3-phosphate and beta-D-fructose 6-phosphate from D-ribose 5-phosphate and D-xylulose 5-phosphate (non-oxidative stage): step 2/3. Transaldolase is important for the balance of metabolites in the pentose-phosphate pathway. The polypeptide is Transaldolase (Campylobacter jejuni subsp. doylei (strain ATCC BAA-1458 / RM4099 / 269.97)).